The chain runs to 114 residues: Fluoride-specific ion channel FluC 2 (114 aa).

4 consecutive transmembrane segments (helical) span residues 3 to 23, 31 to 51, 57 to 77, and 92 to 112; these read YVII…ECWL, LMTA…WILA, GIEL…TFCM, and MIYL…GWNV. Residues Gly-67 and Thr-70 each coordinate Na(+).

Belongs to the fluoride channel Fluc/FEX (TC 1.A.43) family.

Its subcellular location is the cell membrane. It catalyses the reaction fluoride(in) = fluoride(out). Its activity is regulated as follows. Na(+) is not transported, but it plays an essential structural role and its presence is essential for fluoride channel function. Its function is as follows. Fluoride-specific ion channel. Important for reducing fluoride concentration in the cell, thus reducing its toxicity. In Shouchella clausii (strain KSM-K16) (Alkalihalobacillus clausii), this protein is Fluoride-specific ion channel FluC 2.